The following is a 367-amino-acid chain: Avirulence protein ATR5 (367 aa).

Positions 1–16 (MRLISPALVVSTAIQA) are cleaved as a signal peptide. An N-linked (GlcNAc...) asparagine glycan is attached at Asn20. The segment at 33–65 (NPLASAHPPDVGYDGVPAGRVRNPDDPTTEERT) is disordered. Over residues 54–65 (RNPDDPTTEERT) the composition is skewed to basic and acidic residues. A dEER motif is present at residues 61–64 (TEER).

This sequence belongs to the RxLR effector family.

The protein resides in the secreted. Its subcellular location is the host cell. Functionally, secreted effector that acts as an elicitor of hypersensitive response (HR) specifically on plants carrying defense protein RPP5. This chain is Avirulence protein ATR5, found in Hyaloperonospora arabidopsidis (strain Emoy2) (Downy mildew agent).